The following is a 404-amino-acid chain: Spore development regulator RYP2 (404 aa).

Disordered regions lie at residues 1–46 (MSAP…RKAV), 200–231 (LLKRPLNRAEPDYPAPPTQPRTPERSGASSQQ), and 382–404 (SGQSFSQSAGHMQSPSQVPPAWG). Residues 17–194 (LQSADFRLTV…ADQGVKLRIR (178 aa)) enclose the Velvet domain. Basic and acidic residues predominate over residues 29–46 (NPERARVAGGKEKERKAV). Residues 382–397 (SGQSFSQSAGHMQSPS) are compositionally biased toward polar residues.

It belongs to the velvet family. VosA subfamily. In terms of assembly, forms a heterodimeric complex with RYP3; the formation of the RYP2-RYP3 complex is light-dependent.

Its subcellular location is the nucleus. In terms of biological role, component of the RYP2-RYP3 heterodimeric complex that plays a dual role in activating genes associated with spore maturation and repressing certain development-associated genes. The complex binds DNA through the DNA-binding domain of vosA that recognizes an 11-nucleotide consensus sequence 5'-CTGGCCGCGGC-3' consisting of two motifs in the promoters of key developmental regulatory genes. Required for viable spore production and regulation of sporulation in response to temperature and for the switch to yeast-form in the presence of host cells. The polypeptide is Spore development regulator RYP2 (Ajellomyces capsulatus (Darling's disease fungus)).